The sequence spans 519 residues: uncharacterized protein (519 aa).

The next 13 helical transmembrane spans lie at 19–39 (FSSSVWSIVPALLAIILAIAT), 42–62 (VLVSLSAGIIIGSLMLSDWQI), 87–107 (MNIVLFLLLLGVLTALLTVSG), 128–148 (LLAASLVFVTFIDDYFHSLAV), 179–199 (VMMPVSSWGAYIITLIGGLLA), 220–240 (FYAIFSIIMVFFVAYFSFDIA), 270–290 (LILPILVLIIATVSMMIYTGA), 311–331 (VGTSLVVGGFCSIIISTLLII), 345–365 (WIVGIKSMSGAIAILFFAWTI), 386–406 (IPMQFLPVILFVLGAAMAFST), 413–433 (FGIMLPIAAAMAANAAPELLL), 475–495 (LPYAATVATATSIGYIVVGFT), and 496–516 (YSGLAGFAATAVSLIVIIFAV).

The protein localises to the cell membrane. This is an uncharacterized protein from Haemophilus influenzae (strain ATCC 51907 / DSM 11121 / KW20 / Rd).